The primary structure comprises 172 residues: Fimbrial-like protein FimF (172 aa).

A signal peptide spans 1-21; sequence MILRRVFIAIGCVLFSPLSQA. A disulfide bond links Cys41 and Cys81.

The protein belongs to the fimbrial protein family.

It localises to the fimbrium. In Salmonella typhimurium (strain LT2 / SGSC1412 / ATCC 700720), this protein is Fimbrial-like protein FimF (fimF).